A 293-amino-acid chain; its full sequence is Microtubule-associated protein RP/EB family member 1B (293 aa).

Residues 13–115 (FVGRNEILSW…FLQWLKRFCD (103 aa)) enclose the Calponin-homology (CH) domain. Disordered stretches follow at residues 124-188 (ENYN…SAEV) and 262-293 (LGLEGYEEEGKEEEEEEEEEEEEAAAAAETQT). Basic and acidic residues predominate over residues 129-141 (VERRSRGGREKSV). Over residues 151 to 166 (LQTNNMHHPPVATSNK) the composition is skewed to polar residues. In terms of domain architecture, EB1 C-terminal spans 180 to 250 (GGSNSSAEVQ…LYATDANESV (71 aa)). Acidic residues predominate over residues 266–285 (GYEEEGKEEEEEEEEEEEEA).

The protein belongs to the MAPRE family. Homodimer and heterodimer with EB1A. Highly expressed in guard cells of leaf stomata, pollen grains and pollen tubes. Expressed in young roots.

The protein localises to the cytoplasm. Its subcellular location is the cytoskeleton. The protein resides in the spindle pole. It is found in the phragmoplast. Binds to the plus end of microtubules and regulates the dynamics of the microtubule cytoskeleton. May be involved in anchoring microtubules to their nucleation sites and/or functioning as a reservoir for distribution to the growing end. In plants, microtubule minus ends are not necessarily severed from the nucleation site and transported to the plus end of a microtubule as part of the recycling process. May play a role in endomembrane organization during polarized growth of plant cells. This is Microtubule-associated protein RP/EB family member 1B (EB1B) from Arabidopsis thaliana (Mouse-ear cress).